A 579-amino-acid polypeptide reads, in one-letter code: Putative ABC transporter ATP-binding protein VPA1482 (579 aa).

ABC transporter domains lie at 3–244 (IEFS…GIRE) and 299–533 (LEVR…ANLT). ATP is bound by residues 37–44 (GPSGSGKS) and 332–339 (GKNGSGKS).

It belongs to the ABC transporter superfamily.

It is found in the cell inner membrane. Functionally, probably part of an ABC transporter complex. Responsible for energy coupling to the transport system. The sequence is that of Putative ABC transporter ATP-binding protein VPA1482 from Vibrio parahaemolyticus serotype O3:K6 (strain RIMD 2210633).